The sequence spans 446 residues: Putrescine N-hydroxylase (446 aa).

6 residues coordinate FAD: Phe-17, Asp-37, Ser-38, Lys-39, Trp-44, and His-45. NADP(+) is bound by residues Thr-54, Gln-56, and Arg-98. Gln-56 is a binding site for FAD. Val-121 is an FAD binding site. NADP(+)-binding residues include Ser-199, Lys-223, Tyr-267, and Leu-301. Positions 378, 389, and 391 each coordinate FAD.

Belongs to the lysine N(6)-hydroxylase/L-ornithine N(5)-oxygenase family. As to quaternary structure, homotetramer. FAD serves as cofactor.

It carries out the reaction putrescine + NADPH + O2 = N-hydroxyputrescine + NADP(+) + H2O. The protein operates within siderophore biosynthesis. Functionally, N-hydroxylating monooxygenase involved in the biosynthesis of fimsbactin A, the major siderophore produced by A.baumannii. Catalyzes the N-hydroxylation of the aliphatic diamine putrescine into N-hydroxyputrescine (NHP). Putrescine is the preferred substrate, but the enzyme can also catalyze the N-hydroxylation of cadaverine, with 4-fold lower catalytic efficiency. Cannot use lysine or ornithine as substrates. Uses both NADPH and NADH as the reducing cofactor with a preference for NADPH. This Acinetobacter baumannii (strain ATCC 17978 / DSM 105126 / CIP 53.77 / LMG 1025 / NCDC KC755 / 5377) protein is Putrescine N-hydroxylase.